The sequence spans 432 residues: Adenylosuccinate synthetase (432 aa).

Residues 12–18 and 40–42 each bind GTP; these read GDEGKGK and GHT. The active-site Proton acceptor is aspartate 13. 2 residues coordinate Mg(2+): aspartate 13 and glycine 40. Residues 13-16, 38-41, threonine 132, arginine 146, glutamine 226, threonine 241, and arginine 305 contribute to the IMP site; these read DEGK and NAGH. Residue histidine 41 is the Proton donor of the active site. 301–307 is a substrate binding site; the sequence is VVTGRKR. Residues arginine 307, 333-335, and 415-417 contribute to the GTP site; these read KLD and STS.

Belongs to the adenylosuccinate synthetase family. Homodimer. It depends on Mg(2+) as a cofactor.

The protein localises to the cytoplasm. The catalysed reaction is IMP + L-aspartate + GTP = N(6)-(1,2-dicarboxyethyl)-AMP + GDP + phosphate + 2 H(+). The protein operates within purine metabolism; AMP biosynthesis via de novo pathway; AMP from IMP: step 1/2. Its function is as follows. Plays an important role in the de novo pathway of purine nucleotide biosynthesis. Catalyzes the first committed step in the biosynthesis of AMP from IMP. The protein is Adenylosuccinate synthetase of Rhizobium leguminosarum bv. trifolii (strain WSM2304).